The following is a 386-amino-acid chain: Mannitol-1-phosphate 5-dehydrogenase (386 aa).

Residue 3–14 (AVHFGAGNIGRG) participates in NAD(+) binding.

It belongs to the mannitol dehydrogenase family.

The enzyme catalyses D-mannitol 1-phosphate + NAD(+) = beta-D-fructose 6-phosphate + NADH + H(+). This Brevibacillus brevis (strain 47 / JCM 6285 / NBRC 100599) protein is Mannitol-1-phosphate 5-dehydrogenase.